A 320-amino-acid chain; its full sequence is Cytochrome f (320 aa).

The first 35 residues, 1-35 (MQTRNAFSWLKKQITRSISVSLMIYILTRTSISSA), serve as a signal peptide directing secretion. Tyrosine 36, cysteine 56, cysteine 59, and histidine 60 together coordinate heme. The helical transmembrane segment at 286 to 306 (VQGLLFFLASVILAQIFLVLK) threads the bilayer.

The protein belongs to the cytochrome f family. As to quaternary structure, the 4 large subunits of the cytochrome b6-f complex are cytochrome b6, subunit IV (17 kDa polypeptide, petD), cytochrome f and the Rieske protein, while the 4 small subunits are PetG, PetL, PetM and PetN. The complex functions as a dimer. The cofactor is heme.

It is found in the plastid. It localises to the chloroplast thylakoid membrane. Its function is as follows. Component of the cytochrome b6-f complex, which mediates electron transfer between photosystem II (PSII) and photosystem I (PSI), cyclic electron flow around PSI, and state transitions. In Solanum bulbocastanum (Wild potato), this protein is Cytochrome f.